We begin with the raw amino-acid sequence, 65 residues long: Large ribosomal subunit protein uL29 (65 aa).

Belongs to the universal ribosomal protein uL29 family.

This is Large ribosomal subunit protein uL29 from Coxiella burnetii (strain CbuK_Q154) (Coxiella burnetii (strain Q154)).